We begin with the raw amino-acid sequence, 551 residues long: MDRRRFIKGSMAMAAVCGTSGIASLFSQAAFAADSDIADGQTQRFDFSILQSMAHDLAQTAWHGAPRPLPDTLATMTPQAYNSIQYDAEKSLWHNVENRQLDAQFFHMGMGFRRRVRMFSVDPATHLAREIHFRPELFKYNDAGVDTKQLEGQSDLGFAGFRVFKAPELARRDVVSFLGASYFRAVDDTYQYGLSARGLAIDTYTDSKEEFPDFTAFWFDTVKPGATTFTVYALLDSASITGAYKFTIHCEKSQVIMDVENHLYARKDIKQLGIAPMTSMFSCGTNERRMCDTIHPQIHDSDRLSMWRGNGEWICRPLNNPQKLQFNAYTDNNPKGFGLLQLDRDFSHYQDIMGWYNKRPSLWVEPRNKWGKGTIGLMEIPTTGETLDNIVCFWQPEKAVKAGDEFAFQYRLYWSAQPPVHCPLARVMATRTGMGGFPEGWAPGEHYPEKWARRFAVDFVGGDLKAAAPKGIEPVITLSSGEAKQIEILYIEPIDGYRIQFDWYPTSDSTDPVDMRMYLRCQGDAISETWLYQYFPPAPDKRQYVDDRVMS.

The segment at residues M1 to A32 is a signal peptide (tat-type signal).

The protein belongs to the OpgD/OpgG family. Predicted to be exported by the Tat system. The position of the signal peptide cleavage has not been experimentally proven.

The protein localises to the periplasm. It participates in glycan metabolism; osmoregulated periplasmic glucan (OPG) biosynthesis. Probably involved in the control of the structural glucose backbone of osmoregulated periplasmic glucans (OPGs). This Escherichia coli O9:H4 (strain HS) protein is Glucans biosynthesis protein D.